Here is a 239-residue protein sequence, read N- to C-terminus: Uridylate kinase (239 aa).

10–13 (KLSG) provides a ligand contact to ATP. The interval 18–23 (GEQGYG) is involved in allosteric activation by GTP. Glycine 52 provides a ligand contact to UMP. ATP contacts are provided by glycine 53 and arginine 57. Residues aspartate 72 and 133–140 (TGNPYFST) each bind UMP. Asparagine 161, tyrosine 167, and glutamate 170 together coordinate ATP.

It belongs to the UMP kinase family. In terms of assembly, homohexamer.

The protein resides in the cytoplasm. It carries out the reaction UMP + ATP = UDP + ADP. It participates in pyrimidine metabolism; CTP biosynthesis via de novo pathway; UDP from UMP (UMPK route): step 1/1. With respect to regulation, allosterically activated by GTP. Inhibited by UTP. Catalyzes the reversible phosphorylation of UMP to UDP. This chain is Uridylate kinase, found in Halalkalibacterium halodurans (strain ATCC BAA-125 / DSM 18197 / FERM 7344 / JCM 9153 / C-125) (Bacillus halodurans).